The chain runs to 655 residues: tRNA-guanine(15) transglycosylase (655 aa).

Residue D89 is the Nucleophile of the active site. Residues D124 and A195 each coordinate substrate. Residues C281, C283, and C286 each coordinate Zn(2+). In terms of domain architecture, PUA spans K577–K652.

Belongs to the archaeosine tRNA-ribosyltransferase family. It depends on Zn(2+) as a cofactor.

The catalysed reaction is guanosine(15) in tRNA + 7-cyano-7-deazaguanine = 7-cyano-7-carbaguanosine(15) in tRNA + guanine. It participates in tRNA modification; archaeosine-tRNA biosynthesis. Exchanges the guanine residue with 7-cyano-7-deazaguanine (preQ0) at position 15 in the dihydrouridine loop (D-loop) of archaeal tRNAs. Can also utilize guanine as substrate. The protein is tRNA-guanine(15) transglycosylase of Methanocaldococcus jannaschii (strain ATCC 43067 / DSM 2661 / JAL-1 / JCM 10045 / NBRC 100440) (Methanococcus jannaschii).